A 475-amino-acid chain; its full sequence is Cytochrome P450 monooxygenase opdE (475 aa).

A helical membrane pass occupies residues 10–32 (VQNIPVLLLSCGFLAILFRSLVL). Cysteine 457 is a binding site for heme.

This sequence belongs to the cytochrome P450 family. Requires heme as cofactor.

Its subcellular location is the membrane. Its pathway is secondary metabolite biosynthesis. In terms of biological role, cytochrome P450 monooxygenase; part of the gene cluster that mediates the biosynthesis of oxopyrrolidines, polyketide-amino acid hybrid compounds with feature structures of tetramic acid. Does not seem to play a role in oxopyrrolidines A and B biosynthesis. May be involved in further modifications of these oxopyrrolidines. This Penicillium oxalicum (strain 114-2 / CGMCC 5302) (Penicillium decumbens) protein is Cytochrome P450 monooxygenase opdE.